The sequence spans 833 residues: Capsid-associated protein Vp91 (833 aa).

The first 18 residues, M1–S18, serve as a signal peptide directing secretion. N-linked (GlcNAc...) asparagine; by host glycosylation is found at N137, N180, N199, and N210. Residues C147–C196 form a C2HC BV-type zinc finger. Cystine bridges form between C207–C220 and C260–C273. One can recognise a Chitin-binding type-2 domain in the interval N223–F281. N-linked (GlcNAc...) asparagine; by host glycosylation is found at N408, N413, N588, and N609. The interval E647–E673 is disordered.

Its subcellular location is the virion. Its function is as follows. Probable capsid-associated protein. In Choristoneura fumiferana nuclear polyhedrosis virus (CfMNPV), this protein is Capsid-associated protein Vp91.